The primary structure comprises 464 residues: 3-deoxy-D-manno-octulosonic acid transferase (464 aa).

The chain crosses the membrane as a helical; Signal-anchor span at residues 2–22; the sequence is MLLYYALSFILLPVYFIIILI. The 47-residue stretch at 47–93 folds into the RPE1 insert domain; it reads DSLDFMQTSANKEEFKGDTSLRTTTYTLIREDEGLGSTYKLPLEASD. Glu107 serves as the catalytic Proton acceptor. CMP contacts are provided by residues 311 to 312, 352 to 354, and 377 to 380; these read PR, FGE, and NILE.

This sequence belongs to the glycosyltransferase group 1 family. Glycosyltransferase 30 subfamily.

The protein resides in the cell inner membrane. The catalysed reaction is lipid IVA (E. coli) + CMP-3-deoxy-beta-D-manno-octulosonate = alpha-Kdo-(2-&gt;6)-lipid IVA (E. coli) + CMP + H(+). Its pathway is bacterial outer membrane biogenesis; LPS core biosynthesis. In terms of biological role, involved in lipopolysaccharide (LPS) biosynthesis. Catalyzes the transfer of 3-deoxy-D-manno-octulosonate (Kdo) residue(s) from CMP-Kdo to lipid IV(A), the tetraacyldisaccharide-1,4'-bisphosphate precursor of lipid A. The protein is 3-deoxy-D-manno-octulosonic acid transferase (waaA) of Rickettsia conorii (strain ATCC VR-613 / Malish 7).